Reading from the N-terminus, the 376-residue chain is Glucose-1-phosphate adenylyltransferase (376 aa).

Alpha-D-glucose 1-phosphate-binding positions include Y101, G166, 181 to 182 (EK), and S192.

It belongs to the bacterial/plant glucose-1-phosphate adenylyltransferase family. As to quaternary structure, homotetramer.

The enzyme catalyses alpha-D-glucose 1-phosphate + ATP + H(+) = ADP-alpha-D-glucose + diphosphate. The protein operates within glycan biosynthesis; glycogen biosynthesis. In terms of biological role, involved in the biosynthesis of ADP-glucose, a building block required for the elongation reactions to produce glycogen. Catalyzes the reaction between ATP and alpha-D-glucose 1-phosphate (G1P) to produce pyrophosphate and ADP-Glc. The sequence is that of Glucose-1-phosphate adenylyltransferase from Bacillus cereus (strain Q1).